The sequence spans 801 residues: Phosphatidylinositol 4-phosphate 5-kinase 1 (801 aa).

A signal peptide spans 1–21; the sequence is MPGLHVVSFLVVLLLQLRSSG. MORN repeat units lie at residues 41–63, 64–86, 87–109, 110–132, 133–155, 156–178, 182–201, and 202–223; these read YVGSFDGLVPHGPGKYMWTDGAL, YDGEWDKSKMTGRGLIQWPSGAS, YEGDFRGGFIDGAGTFKGVDGSV, YKGSWRMNKKHGMGTMVYSNSDT, YEGFWNEGLPDEFGKYTWADGNV, YIGRWKSGKMNGSGVMQWINGDT, NWLNGLAHGKGYCKYASGAC, and YIGTWDRGLKDGHGTFYQPGSK. The region spanning 366 to 797 is the PIPK domain; sequence GHRSYYLMLN…RFISFLEKVF (432 aa).

As to expression, expressed in young seedlings, shoot and seeds, and at lower level in roots, stem and leaf.

It catalyses the reaction a 1,2-diacyl-sn-glycero-3-phospho-(1D-myo-inositol 4-phosphate) + ATP = a 1,2-diacyl-sn-glycero-3-phospho-(1D-myo-inositol-4,5-bisphosphate) + ADP + H(+). Functionally, involved in flowering. May suppress floral initiation by modifying the expression of genes related to floral induction. The sequence is that of Phosphatidylinositol 4-phosphate 5-kinase 1 (PIPK1) from Oryza sativa subsp. japonica (Rice).